The chain runs to 114 residues: Large ribosomal subunit protein uL22 (114 aa).

Belongs to the universal ribosomal protein uL22 family. As to quaternary structure, part of the 50S ribosomal subunit.

This protein binds specifically to 23S rRNA; its binding is stimulated by other ribosomal proteins, e.g. L4, L17, and L20. It is important during the early stages of 50S assembly. It makes multiple contacts with different domains of the 23S rRNA in the assembled 50S subunit and ribosome. Functionally, the globular domain of the protein is located near the polypeptide exit tunnel on the outside of the subunit, while an extended beta-hairpin is found that lines the wall of the exit tunnel in the center of the 70S ribosome. The protein is Large ribosomal subunit protein uL22 of Mycoplasmopsis agalactiae (strain NCTC 10123 / CIP 59.7 / PG2) (Mycoplasma agalactiae).